The primary structure comprises 207 residues: Shikimate kinase (207 aa).

ATP is bound at residue 32–37 (GVGKST). A Mg(2+)-binding site is contributed by Ser36. 3 residues coordinate substrate: Asp54, Arg78, and Gly100. Arg138 is a binding site for ATP. Arg157 provides a ligand contact to substrate.

This sequence belongs to the shikimate kinase family. As to quaternary structure, monomer. Mg(2+) is required as a cofactor.

Its subcellular location is the cytoplasm. It carries out the reaction shikimate + ATP = 3-phosphoshikimate + ADP + H(+). It functions in the pathway metabolic intermediate biosynthesis; chorismate biosynthesis; chorismate from D-erythrose 4-phosphate and phosphoenolpyruvate: step 5/7. Catalyzes the specific phosphorylation of the 3-hydroxyl group of shikimic acid using ATP as a cosubstrate. This is Shikimate kinase from Bradyrhizobium diazoefficiens (strain JCM 10833 / BCRC 13528 / IAM 13628 / NBRC 14792 / USDA 110).